The chain runs to 512 residues: Lysine--tRNA ligase (512 aa).

Mg(2+)-binding residues include Glu-422 and Glu-429.

It belongs to the class-II aminoacyl-tRNA synthetase family. Homodimer. It depends on Mg(2+) as a cofactor.

It localises to the cytoplasm. The catalysed reaction is tRNA(Lys) + L-lysine + ATP = L-lysyl-tRNA(Lys) + AMP + diphosphate. The protein is Lysine--tRNA ligase of Paraburkholderia phymatum (strain DSM 17167 / CIP 108236 / LMG 21445 / STM815) (Burkholderia phymatum).